The following is a 465-amino-acid chain: Exoenzymes regulatory protein AepA (465 aa).

The N-terminal stretch at Met1–Ala21 is a signal peptide.

This sequence belongs to the metallo-dependent hydrolases superfamily.

Involved in the control of extracellular enzymes production. Stimulates PEL, PEH, CEL, and PRT production. The protein is Exoenzymes regulatory protein AepA (aepA) of Pectobacterium carotovorum subsp. carotovorum (Erwinia carotovora subsp. carotovora).